Consider the following 663-residue polypeptide: Polyunsaturated fatty acid lipoxygenase ALOX15 (663 aa).

In terms of domain architecture, PLAT spans 2–115; that stretch reads GVYRIRVSTG…ILSLPEGTGC (114 aa). The 548-residue stretch at 116–663 folds into the Lipoxygenase domain; the sequence is TVVEDSQGLF…PSMVENSVAI (548 aa). The residue at position 149 (serine 149) is a Phosphoserine. Residues histidine 361, histidine 366, histidine 541, histidine 545, and isoleucine 663 each coordinate Fe cation.

The protein belongs to the lipoxygenase family. Interacts with PEBP1; in response to IL13/interleukin-13, prevents the interaction of PEBP1 with RAF1 to activate the ERK signaling cascade. The cofactor is Fe cation. Detected in leukocytes, lung and aorta.

The protein resides in the cytoplasm. It is found in the cytosol. It localises to the cell membrane. Its subcellular location is the lipid droplet. The catalysed reaction is (5Z,8Z,11Z,14Z)-eicosatetraenoate + O2 = (12S)-hydroperoxy-(5Z,8Z,10E,14Z)-eicosatetraenoate. It catalyses the reaction (5Z,8Z,11Z,14Z)-eicosatetraenoate + O2 = (15S)-hydroperoxy-(5Z,8Z,11Z,13E)-eicosatetraenoate. The enzyme catalyses (9Z,12Z)-octadecadienoate + O2 = (13S)-hydroperoxy-(9Z,11E)-octadecadienoate. It carries out the reaction (12S)-hydroperoxy-(5Z,8Z,10E,14Z)-eicosatetraenoate = (8S)-hydroxy-(11S,12S)-epoxy-(5Z,9E,14Z)-eicosatrienoate. The catalysed reaction is (5Z,8Z,11Z,14Z)-eicosatetraenoate + 2 O2 = (14R,15S)-dihydroperoxy-(5Z,8Z,10E,12E)-eicosatetraenoate. It catalyses the reaction (5Z,8Z,11Z,14Z)-eicosatetraenoate + 2 O2 = (8S,15S)-dihydroperoxy-(5Z,9E,11Z,13E)-eicosatetraenoate. The enzyme catalyses (14S,15R)-epoxy-(5Z,8Z,11Z)-eicosatrienoate + O2 = (8S)-hydroperoxy-(14S,15R)-epoxy-(5Z,9E,11Z)-eicosatrienoate. It carries out the reaction (14S,15R)-epoxy-(5Z,8Z,11Z)-eicosatrienoate + O2 = (12S)-hydroperoxy-(14S,15R)-epoxy-(5Z,8Z,10E)-eicosatrienoate. The catalysed reaction is (14R,15S)-epoxy-(5Z,8Z,11Z)-eicosatrienoate + O2 = (5S)-hydroperoxy-(14R,15S)-epoxy-(6E,8Z,11Z)-eicosatrienoate. It catalyses the reaction (14R,15S)-epoxy-(5Z,8Z,11Z)-eicosatrienoate + O2 = (12S)-hydroperoxy-(14R,15S)-epoxy-(5Z,8Z,10E)-eicosatrienoate. The enzyme catalyses (15R)-hydroperoxy-(5Z,8Z,11Z,13E)-eicosatetraenoate = 15-oxo-(5Z,8Z,11Z,13E)-eicosatetraenoate + H2O. It carries out the reaction (15S)-hydroperoxy-(5Z,8Z,11Z,13E)-eicosatetraenoate = (14S,15S)-epoxy-(5Z,8Z,10E,12E)-eicosatetraenoate + H2O. The catalysed reaction is (4Z,7Z,10Z,13Z,16Z)-docosapentaenoate + O2 = 14-hydroperoxy-(4Z,7Z,10Z,12E,16Z)-docosapentaenoate. It catalyses the reaction (7Z,10Z,13Z,16Z,19Z)-docosapentaenoate + O2 = 14-hydroperoxy-(7Z,10Z,12E,16Z,19Z)-docosapentaenoate. The enzyme catalyses (4Z,7Z,10Z,13Z,16Z,19Z)-docosahexaenoate + O2 = (14S)-hydroperoxy-(4Z,7Z,10Z,12E,16Z,19Z)-docosahexaenoate. It carries out the reaction (4Z,7Z,10Z,13Z,16Z,19Z)-docosahexaenoate + O2 = (17S)-hydroperoxy-(4Z,7Z,10Z,13Z,15E,19Z)-docosahexaenoate. The catalysed reaction is (7S)-hydroperoxy-(4Z,8E,10Z,13Z,16Z,19Z)-docosahexaenoate + O2 = (7S,14S)-dihydroperoxy-(4Z,8E,10Z,12E,16Z,19Z)-docosahexaenoate. It catalyses the reaction (7S)-hydroperoxy-(4Z,8E,10Z,13Z,16Z,19Z)-docosahexaenoate + O2 = (7S,17S)-dihydroperoxy-(4Z,8E,10Z,13Z,15E,19Z)-docosahexaenoate. The enzyme catalyses (4Z,7Z,10Z,13Z,16Z,19Z)-docosahexaenoate + O2 = (11S)-hydroperoxy-(4Z,7Z,9E,13Z,16Z,19Z)-docosahexaenoate. It carries out the reaction N-(5Z,8Z,11Z,14Z)-eicosatetraenoyl-taurine + O2 = N-(12S)-hydroperoxy-(5Z,8Z,10E,14Z)-eicosatetraenoyl-taurine. The catalysed reaction is N-(5Z,8Z,11Z,14Z)-eicosatetraenoyl-gamma-aminobutanoate + O2 = N-(12S)-hydroperoxy-(5Z,8Z,10E,14Z)-eicosatetraenoyl-gamma-aminobutanoate. It catalyses the reaction N-(5Z,8Z,11Z,14Z)-eicosatetraenoyl-glycine + O2 = N-(12S)-hydroperoxy-(5Z,8Z,10E,14Z)-eicosatetraenoyl-glycine. The enzyme catalyses N-(5Z,8Z,11Z,14Z)-eicosatetraenoyl-L-alanine + O2 = N-(12S)-hydroperoxy-(5Z,8Z,10E,14Z)-eicosatetraenoyl-alanine. It carries out the reaction N-(5Z,8Z,11Z,14Z)-eicosatetraenoyl-taurine + O2 = N-(15S)-hydroperoxy-(5Z,8Z,11Z,13E)-eicosatetraenoyl-taurine. The catalysed reaction is N-(5Z,8Z,11Z,14Z)-eicosatetraenoyl-gamma-aminobutanoate + O2 = N-(15S)-hydroperoxy-(5Z,8Z,11Z,13E)-eicosatetraenoyl-gamma-aminobutanoate. It catalyses the reaction N-(5Z,8Z,11Z,14Z)-eicosatetraenoyl-glycine + O2 = N-(15S)-hydroperoxy-(5Z,8Z,11Z,13E)-eicosatetraenoyl-glycine. The enzyme catalyses N-(5Z,8Z,11Z,14Z)-eicosatetraenoyl-L-alanine + O2 = N-(15S)-hydroperoxy-(5Z,8Z,11Z,13E)-eicosatetraenoyl-alanine. It participates in lipid metabolism; hydroperoxy eicosatetraenoic acid biosynthesis. Non-heme iron-containing dioxygenase that catalyzes the stereo-specific peroxidation of free and esterified polyunsaturated fatty acids generating a spectrum of bioactive lipid mediators. It inserts peroxyl groups at C12 or C15 of arachidonate ((5Z,8Z,11Z,14Z)-eicosatetraenoate) producing both 12-hydroperoxyeicosatetraenoate/12-HPETE and 15-hydroperoxyeicosatetraenoate/15-HPETE. It may then act on 12-HPETE to produce hepoxilins, which may show pro-inflammatory properties. Can also peroxidize linoleate ((9Z,12Z)-octadecadienoate) to 13-hydroperoxyoctadecadienoate. May participate in the sequential oxidations of DHA ((4Z,7Z,10Z,13Z,16Z,19Z)-docosahexaenoate) to generate specialized pro-resolving mediators (SPMs)like resolvin D5 ((7S,17S)-diHPDHA) and (7S,14S)-diHPDHA, that actively down-regulate the immune response and have anti-aggregation properties with platelets. Can convert epoxy fatty acids to hydroperoxy-epoxides derivatives followed by an intramolecular nucleophilic substitution leading to the formation of monocyclic endoperoxides. Plays an important role during the maintenance of self-tolerance by peroxidizing membrane-bound phosphatidylethanolamine which can then signal the sorting process for clearance of apoptotic cells during inflammation and prevent an autoimmune response. In addition to its role in the immune and inflammatory responses, this enzyme may play a role in epithelial wound healing in the cornea through production of lipoxin A4 (LXA(4)) and docosahexaenoic acid-derived neuroprotectin D1 (NPD1; 10R,17S-HDHA), both lipid autacoids exhibit anti-inflammatory and neuroprotective properties. Furthermore, it may regulate actin polymerization which is crucial for several biological processes such as the phagocytosis of apoptotic cells. It is also implicated in the generation of endogenous ligands for peroxisome proliferator activated receptor (PPAR-gamma), hence modulating macrophage development and function. It may also exert a negative effect on skeletal development by regulating bone mass through this pathway. As well as participates in ER stress and downstream inflammation in adipocytes, pancreatic islets, and liver. Finally, it is also involved in the cellular response to IL13/interleukin-13. This chain is Polyunsaturated fatty acid lipoxygenase ALOX15, found in Rattus norvegicus (Rat).